The primary structure comprises 184 residues: Photosystem I assembly protein Ycf4 (184 aa).

Transmembrane regions (helical) follow at residues Phe-22–Ser-42 and Ile-57–Ser-77.

Belongs to the Ycf4 family.

The protein localises to the plastid. The protein resides in the chloroplast thylakoid membrane. Seems to be required for the assembly of the photosystem I complex. The chain is Photosystem I assembly protein Ycf4 from Gossypium barbadense (Sea Island cotton).